The sequence spans 470 residues: 6-phosphofructo-2-kinase/fructose-2,6-bisphosphatase (470 aa).

The tract at residues M1–T249 is 6-phosphofructo-2-kinase. At S31 the chain carries Phosphoserine; by PKA. G47–Y55 is a binding site for ATP. Residues R80 and R104 each coordinate beta-D-fructose 6-phosphate. Residue D130 is part of the active site. T132 and R138 together coordinate beta-D-fructose 6-phosphate. C160 is a catalytic residue. An ATP-binding site is contributed by N169–K174. Beta-D-fructose 6-phosphate is bound by residues K174, R195, and Y199. The interval P250–F470 is fructose-2,6-bisphosphatase. Beta-D-fructose 2,6-bisphosphate is bound at residue R257. H258 acts as the Tele-phosphohistidine intermediate in catalysis. Beta-D-fructose 2,6-bisphosphate contacts are provided by N264 and G270. The Proton donor/acceptor role is filled by E327. Positions 338, 352, 356, 367, 393, and 397 each coordinate beta-D-fructose 2,6-bisphosphate. F349–R352 contacts ATP. ATP is bound by residues Q393–R397 and Y429.

It in the C-terminal section; belongs to the phosphoglycerate mutase family. In terms of assembly, homodimer.

The catalysed reaction is beta-D-fructose 2,6-bisphosphate + H2O = beta-D-fructose 6-phosphate + phosphate. The enzyme catalyses beta-D-fructose 6-phosphate + ATP = beta-D-fructose 2,6-bisphosphate + ADP + H(+). Phosphorylation results in inhibition of the kinase activity. Synthesis and degradation of fructose 2,6-bisphosphate. This is 6-phosphofructo-2-kinase/fructose-2,6-bisphosphatase from Aquarana catesbeiana (American bullfrog).